The primary structure comprises 184 residues: GTP cyclohydrolase 1 (184 aa).

Residues cysteine 74, histidine 77, and cysteine 145 each contribute to the Zn(2+) site.

This sequence belongs to the GTP cyclohydrolase I family. In terms of assembly, toroid-shaped homodecamer, composed of two pentamers of five dimers.

The enzyme catalyses GTP + H2O = 7,8-dihydroneopterin 3'-triphosphate + formate + H(+). It functions in the pathway cofactor biosynthesis; 7,8-dihydroneopterin triphosphate biosynthesis; 7,8-dihydroneopterin triphosphate from GTP: step 1/1. The protein is GTP cyclohydrolase 1 (folE) of Aquifex aeolicus (strain VF5).